A 256-amino-acid chain; its full sequence is Global transcriptional regulator CodY (256 aa).

Residues 1-155 are GAF domain; sequence MSLLSKTREL…AATVIGMEIL (155 aa). Positions 203-222 form a DNA-binding region, H-T-H motif; it reads ASKVADRVGITRSVIVNALR.

This sequence belongs to the CodY family.

The protein localises to the cytoplasm. Its function is as follows. DNA-binding global transcriptional regulator which is involved in the adaptive response to starvation and acts by directly or indirectly controlling the expression of numerous genes in response to nutrient availability. During rapid exponential growth, CodY is highly active and represses genes whose products allow adaptation to nutrient depletion. The chain is Global transcriptional regulator CodY from Staphylococcus epidermidis (strain ATCC 35984 / DSM 28319 / BCRC 17069 / CCUG 31568 / BM 3577 / RP62A).